The sequence spans 351 residues: ATP-dependent 6-phosphofructokinase subunit gamma (351 aa).

Heterododecamer of 4 alpha, 4 beta and 4 gamma chains. The gamma chain bridges the N-terminal halves of the alpha and beta subunits.

Its subcellular location is the cytoplasm. It functions in the pathway carbohydrate degradation; glycolysis; D-glyceraldehyde 3-phosphate and glycerone phosphate from D-glucose: step 3/4. In terms of biological role, structural subunit of pyrophosphate--fructose 6-phosphate 1-phosphotransferase. Not required for catalytic activity. Fine-tunes allosteric regulation of the ATP-PFK by ATP, fructose 2,6-bisphosphate and AMP. This Komagataella pastoris (Yeast) protein is ATP-dependent 6-phosphofructokinase subunit gamma (PFK3).